The sequence spans 125 residues: Histone H2A.v3 (125 aa).

This sequence belongs to the histone H2A family. As to quaternary structure, the nucleosome is a histone octamer containing two molecules each of H2A, H2B, H3 and H4 assembled in one H3-H4 heterotetramer and two H2A-H2B heterodimers. The octamer wraps approximately 147 bp of DNA.

Its subcellular location is the nucleus. It is found in the chromosome. Its function is as follows. Core component of nucleosome which plays a central role in DNA double strand break (DSB) repair. Nucleosomes wrap and compact DNA into chromatin, limiting DNA accessibility to the cellular machineries which require DNA as a template. Histones thereby play a central role in transcription regulation, DNA repair, DNA replication and chromosomal stability. DNA accessibility is regulated via a complex set of post-translational modifications of histones, also called histone code, and nucleosome remodeling. The chain is Histone H2A.v3 (H2Av3) from Dictyostelium discoideum (Social amoeba).